A 335-amino-acid chain; its full sequence is Fructose-1,6-bisphosphatase class 1 (335 aa).

The Mg(2+) site is built by glutamate 92, aspartate 114, leucine 116, and aspartate 117. Residues 117-120, asparagine 209, and lysine 275 each bind substrate; that span reads DGSS. Glutamate 281 is a binding site for Mg(2+).

This sequence belongs to the FBPase class 1 family. In terms of assembly, homotetramer. Mg(2+) is required as a cofactor.

It is found in the cytoplasm. It catalyses the reaction beta-D-fructose 1,6-bisphosphate + H2O = beta-D-fructose 6-phosphate + phosphate. It participates in carbohydrate biosynthesis; gluconeogenesis. The polypeptide is Fructose-1,6-bisphosphatase class 1 (Delftia acidovorans (strain DSM 14801 / SPH-1)).